The chain runs to 179 residues: Translation initiation factor IF-3 (179 aa).

It belongs to the IF-3 family. Monomer.

Its subcellular location is the cytoplasm. Its function is as follows. IF-3 binds to the 30S ribosomal subunit and shifts the equilibrium between 70S ribosomes and their 50S and 30S subunits in favor of the free subunits, thus enhancing the availability of 30S subunits on which protein synthesis initiation begins. In Leptospira borgpetersenii serovar Hardjo-bovis (strain L550), this protein is Translation initiation factor IF-3.